Consider the following 751-residue polypeptide: Semaphorin-3C (751 aa).

The N-terminal stretch at 1–20 is a signal peptide; it reads MAFRAICVLVGVFICSICVR. One can recognise a Sema domain in the interval 28 to 511; it reads RVYLTFDELR…SNEGVSQVSL (484 aa). N81 carries an N-linked (GlcNAc...) asparagine glycan. The cysteines at positions 101 and 112 are disulfide-linked. N123 is a glycosylation site (N-linked (GlcNAc...) asparagine). C130 and C139 form a disulfide bridge. N252 and N268 each carry an N-linked (GlcNAc...) asparagine glycan. 2 disulfides stabilise this stretch: C266/C378 and C290/C338. N465 carries an N-linked (GlcNAc...) asparagine glycan. A disulfide bridge links C514 with C532. An Ig-like C2-type domain is found at 571 to 655; the sequence is AYRNAAEIVQ…TENSFKQTIA (85 aa). N-linked (GlcNAc...) asparagine glycosylation is found at N585 and N586. A disulfide bridge links C643 with C709.

It belongs to the semaphorin family. In terms of assembly, interacts with PLXND1.

The protein resides in the secreted. Its function is as follows. Binds to plexin family members and plays an important role in the regulation of developmental processes. Required for normal cardiovascular development during embryogenesis. Functions as attractant for growing axons, and thereby plays an important role in axon growth and axon guidance. The protein is Semaphorin-3C (Sema3c) of Mus musculus (Mouse).